A 504-amino-acid polypeptide reads, in one-letter code: ATP synthase subunit alpha, chloroplastic (504 aa).

170 to 177 (GDRQTGKT) provides a ligand contact to ATP.

This sequence belongs to the ATPase alpha/beta chains family. In terms of assembly, F-type ATPases have 2 components, CF(1) - the catalytic core - and CF(0) - the membrane proton channel. CF(1) has five subunits: alpha(3), beta(3), gamma(1), delta(1), epsilon(1). CF(0) has four main subunits: a, b, b' and c.

Its subcellular location is the plastid. The protein localises to the chloroplast thylakoid membrane. The catalysed reaction is ATP + H2O + 4 H(+)(in) = ADP + phosphate + 5 H(+)(out). Its function is as follows. Produces ATP from ADP in the presence of a proton gradient across the membrane. The alpha chain is a regulatory subunit. This Pyropia yezoensis (Susabi-nori) protein is ATP synthase subunit alpha, chloroplastic.